The chain runs to 154 residues: Catabolic 3-dehydroquinase (154 aa).

Catalysis depends on Tyr-25, which acts as the Proton acceptor. Substrate contacts are provided by Asn-79, His-85, and Asp-92. His-105 functions as the Proton donor in the catalytic mechanism. Substrate contacts are provided by residues 106–107 (IS) and Arg-116.

It belongs to the type-II 3-dehydroquinase family. Homododecamer. Adopts a ring-like structure, composed of an arrangement of two hexameric rings stacked on top of one another.

It catalyses the reaction 3-dehydroquinate = 3-dehydroshikimate + H2O. Its pathway is aromatic compound metabolism; 3,4-dihydroxybenzoate biosynthesis; 3,4-dihydroxybenzoate from 3-dehydroquinate: step 1/2. Functionally, is involved in the catabolism of quinate. Allows the utilization of quinate as carbon source via the beta-ketoadipate pathway. This is Catabolic 3-dehydroquinase from Botryotinia fuckeliana (strain B05.10) (Noble rot fungus).